Consider the following 389-residue polypeptide: Succinate--CoA ligase [ADP-forming] subunit beta (389 aa).

In terms of domain architecture, ATP-grasp spans lysine 9–glutamate 244. ATP contacts are provided by residues lysine 46, glycine 53–glycine 55, glutamate 99, glycine 102, and glutamate 107. Residues asparagine 199 and aspartate 213 each contribute to the Mg(2+) site. Substrate-binding positions include asparagine 264 and glycine 321 to valine 323.

It belongs to the succinate/malate CoA ligase beta subunit family. In terms of assembly, heterotetramer of two alpha and two beta subunits. Requires Mg(2+) as cofactor.

The enzyme catalyses succinate + ATP + CoA = succinyl-CoA + ADP + phosphate. It carries out the reaction GTP + succinate + CoA = succinyl-CoA + GDP + phosphate. It participates in carbohydrate metabolism; tricarboxylic acid cycle; succinate from succinyl-CoA (ligase route): step 1/1. In terms of biological role, succinyl-CoA synthetase functions in the citric acid cycle (TCA), coupling the hydrolysis of succinyl-CoA to the synthesis of either ATP or GTP and thus represents the only step of substrate-level phosphorylation in the TCA. The beta subunit provides nucleotide specificity of the enzyme and binds the substrate succinate, while the binding sites for coenzyme A and phosphate are found in the alpha subunit. This is Succinate--CoA ligase [ADP-forming] subunit beta from Tolumonas auensis (strain DSM 9187 / NBRC 110442 / TA 4).